The following is a 202-amino-acid chain: Probable septum site-determining protein MinC (202 aa).

The protein belongs to the MinC family. Interacts with MinD and FtsZ.

In terms of biological role, cell division inhibitor that blocks the formation of polar Z ring septums. Rapidly oscillates between the poles of the cell to destabilize FtsZ filaments that have formed before they mature into polar Z rings. Prevents FtsZ polymerization. The protein is Probable septum site-determining protein MinC of Sulfurihydrogenibium sp. (strain YO3AOP1).